The following is a 123-amino-acid chain: UPF0231 protein plu3616 (123 aa).

The protein belongs to the UPF0231 family.

The protein is UPF0231 protein plu3616 of Photorhabdus laumondii subsp. laumondii (strain DSM 15139 / CIP 105565 / TT01) (Photorhabdus luminescens subsp. laumondii).